The following is a 296-amino-acid chain: MMPLLDKLREQYGVGPLCSELHIAPSTYYHCQQQRHHPDKRSARAQRDDWLKKEIQRVYDENHKVYGVRKVWRQLLREGIRVARCTVARLMAVMGLAGVLRGKKVRTTISRKAVAAGDRVNRQFVAERPDQLWVADFTYVSTWQGFVYVAFIIDVFAGYIVGWRVSSSMETTFVLDALEQALWARRPSGTVHHSDKGSQYVSLAYTQRLKEAGLLASTGSTGDSYDNAMAESINGLYKAKVIHRKSWKNRAEVELATLTWVDWYNNRRLLERLGHTPPAEAEKAYYASIGNDDLAA.

The 161-residue stretch at 125-285 (VAERPDQLWV…TPPAEAEKAY (161 aa)) folds into the Integrase catalytic domain.

Its function is as follows. Involved in the transposition of the insertion sequence. The chain is Transposase for insertion sequence element IS629 from Shigella sonnei.